Here is a 27-residue protein sequence, read N- to C-terminus: Carcinustatin-20 (27 aa).

Leu-27 is modified (leucine amide).

It belongs to the allatostatin family.

Its subcellular location is the secreted. In terms of biological role, may act as a neurotransmitter or neuromodulator. The sequence is that of Carcinustatin-20 from Carcinus maenas (Common shore crab).